Here is a 360-residue protein sequence, read N- to C-terminus: Phosphate acyltransferase (360 aa).

This sequence belongs to the PlsX family. Homodimer. Probably interacts with PlsY.

The protein localises to the cytoplasm. It carries out the reaction a fatty acyl-[ACP] + phosphate = an acyl phosphate + holo-[ACP]. The protein operates within lipid metabolism; phospholipid metabolism. Its function is as follows. Catalyzes the reversible formation of acyl-phosphate (acyl-PO(4)) from acyl-[acyl-carrier-protein] (acyl-ACP). This enzyme utilizes acyl-ACP as fatty acyl donor, but not acyl-CoA. The sequence is that of Phosphate acyltransferase from Janthinobacterium sp. (strain Marseille) (Minibacterium massiliensis).